A 341-amino-acid chain; its full sequence is L-threonine 3-dehydrogenase (341 aa).

Cys38 contributes to the Zn(2+) binding site. Residues Thr40 and His43 each act as charge relay system in the active site. Residues His63, Glu64, Cys93, Cys96, Cys99, and Cys107 each coordinate Zn(2+). NAD(+) is bound by residues Ile175, Asp195, Arg200, 262–264, and 286–287; these read LGI and IY.

Belongs to the zinc-containing alcohol dehydrogenase family. In terms of assembly, homotetramer. The cofactor is Zn(2+).

The protein localises to the cytoplasm. It carries out the reaction L-threonine + NAD(+) = (2S)-2-amino-3-oxobutanoate + NADH + H(+). The protein operates within amino-acid degradation; L-threonine degradation via oxydo-reductase pathway; glycine from L-threonine: step 1/2. Functionally, catalyzes the NAD(+)-dependent oxidation of L-threonine to 2-amino-3-ketobutyrate. The polypeptide is L-threonine 3-dehydrogenase (Shewanella woodyi (strain ATCC 51908 / MS32)).